Here is a 245-residue protein sequence, read N- to C-terminus: Keratin-associated protein 10-12 (245 aa).

Tandem repeats lie at residues 36-40, 41-45, 62-66, 84-88, 94-98, 104-108, 109-113, 114-118, 119-123, 124-128, 131-135, 141-145, 151-155, 156-160, 161-165, 173-177, 183-187, 188-192, and 214-218. Residues 36 to 218 form a 19 X 5 AA repeats of C-C-X(3) region; sequence CCEPPCCAPA…VPVPSCCVPT (183 aa).

It belongs to the KRTAP type 10 family. As to quaternary structure, interacts with hair keratins. In terms of tissue distribution, restricted to a narrow region of the hair fiber cuticle, lying approximately 20 cell layers above the apex of the dermal papilla of the hair root; not detected in any other tissues.

In terms of biological role, in the hair cortex, hair keratin intermediate filaments are embedded in an interfilamentous matrix, consisting of hair keratin-associated proteins (KRTAP), which are essential for the formation of a rigid and resistant hair shaft through their extensive disulfide bond cross-linking with abundant cysteine residues of hair keratins. The matrix proteins include the high-sulfur and high-glycine-tyrosine keratins. The chain is Keratin-associated protein 10-12 (KRTAP10-12) from Homo sapiens (Human).